Reading from the N-terminus, the 372-residue chain is Queuine tRNA-ribosyltransferase (372 aa).

D89 acts as the Proton acceptor in catalysis. Residues 89-93 (DSGGF), D161, and G232 contribute to the substrate site. The tract at residues 262–268 (GIGDLPS) is RNA binding. Residue D281 is the Nucleophile of the active site. The tract at residues 286–290 (TKAAR) is RNA binding; important for wobble base 34 recognition. Positions 319, 321, 324, and 351 each coordinate Zn(2+).

The protein belongs to the queuine tRNA-ribosyltransferase family. In terms of assembly, homodimer. Within each dimer, one monomer is responsible for RNA recognition and catalysis, while the other monomer binds to the replacement base PreQ1. Requires Zn(2+) as cofactor.

The catalysed reaction is 7-aminomethyl-7-carbaguanine + guanosine(34) in tRNA = 7-aminomethyl-7-carbaguanosine(34) in tRNA + guanine. It functions in the pathway tRNA modification; tRNA-queuosine biosynthesis. Catalyzes the base-exchange of a guanine (G) residue with the queuine precursor 7-aminomethyl-7-deazaguanine (PreQ1) at position 34 (anticodon wobble position) in tRNAs with GU(N) anticodons (tRNA-Asp, -Asn, -His and -Tyr). Catalysis occurs through a double-displacement mechanism. The nucleophile active site attacks the C1' of nucleotide 34 to detach the guanine base from the RNA, forming a covalent enzyme-RNA intermediate. The proton acceptor active site deprotonates the incoming PreQ1, allowing a nucleophilic attack on the C1' of the ribose to form the product. After dissociation, two additional enzymatic reactions on the tRNA convert PreQ1 to queuine (Q), resulting in the hypermodified nucleoside queuosine (7-(((4,5-cis-dihydroxy-2-cyclopenten-1-yl)amino)methyl)-7-deazaguanosine). The chain is Queuine tRNA-ribosyltransferase from Chlamydia pneumoniae (Chlamydophila pneumoniae).